The following is a 152-amino-acid chain: 2-C-methyl-D-erythritol 2,4-cyclodiphosphate synthase (152 aa).

A divalent metal cation contacts are provided by Asp-8 and His-10. Residues Asp-8–His-10 and His-34–Ser-35 each bind 4-CDP-2-C-methyl-D-erythritol 2-phosphate. Position 42 (His-42) interacts with a divalent metal cation. 4-CDP-2-C-methyl-D-erythritol 2-phosphate contacts are provided by residues Asp-56–Gly-58, Phe-61–Asp-65, Leu-100–Gly-106, and Phe-131–Glu-135.

This sequence belongs to the IspF family. Homotrimer. Requires a divalent metal cation as cofactor.

The enzyme catalyses 4-CDP-2-C-methyl-D-erythritol 2-phosphate = 2-C-methyl-D-erythritol 2,4-cyclic diphosphate + CMP. Its pathway is isoprenoid biosynthesis; isopentenyl diphosphate biosynthesis via DXP pathway; isopentenyl diphosphate from 1-deoxy-D-xylulose 5-phosphate: step 4/6. Functionally, involved in the biosynthesis of isopentenyl diphosphate (IPP) and dimethylallyl diphosphate (DMAPP), two major building blocks of isoprenoid compounds. Catalyzes the conversion of 4-diphosphocytidyl-2-C-methyl-D-erythritol 2-phosphate (CDP-ME2P) to 2-C-methyl-D-erythritol 2,4-cyclodiphosphate (ME-CPP) with a corresponding release of cytidine 5-monophosphate (CMP). The chain is 2-C-methyl-D-erythritol 2,4-cyclodiphosphate synthase from Thermus thermophilus (strain ATCC 27634 / DSM 579 / HB8).